The primary structure comprises 300 residues: Peptidyl-prolyl cis-trans isomerase E (300 aa).

Residues 6–84 (RTIYVGGLAD…RTIRVNLAKP (79 aa)) form the RRM domain. The 157-residue stretch at 142–298 (FFDIRIGGND…QKIVIYSCGE (157 aa)) folds into the PPIase cyclophilin-type domain.

The protein belongs to the cyclophilin-type PPIase family. PPIase E subfamily.

It is found in the nucleus. The enzyme catalyses [protein]-peptidylproline (omega=180) = [protein]-peptidylproline (omega=0). Functionally, PPIases accelerate the folding of proteins. It catalyzes the cis-trans isomerization of proline imidic peptide bonds in oligopeptides. Combines RNA-binding and PPIase activities. The chain is Peptidyl-prolyl cis-trans isomerase E (cyp33) from Drosophila melanogaster (Fruit fly).